A 1423-amino-acid chain; its full sequence is Fructan beta-fructosidase (1423 aa).

Positions 1–39 (MEEETVCKNWFMRKSGKSWIFGCAVFFVLGLATALPVAA) are cleaved as a signal peptide. Positions 44 to 161 (QTTAADTAVT…TNLEDMSHDT (118 aa)) are disordered. A compositionally biased stretch (polar residues) spans 69–126 (AVTETTQSEGTASKQLTTPAVADQTTEPTDNEPISSSDGASSPYQVTDTTEPQQTLTP). Substrate contacts are provided by residues 455–458 (WAND), Gln474, 513–514 (FS), 581–582 (RD), and Asp783. Residue Asp458 is part of the active site. The tract at residues 867 to 871 (ASVEV) is involved in binding of sugars with beta-(2,6) linkages or binding of molecular weight fructans. A BIG2 domain is found at 924 to 1002 (PVAMNTTTAK…SKENPSLSKT (79 aa)). The segment covering 1368–1385 (DVNSVQQTEPSVMSSSPK) has biased composition (polar residues). The segment at 1368–1394 (DVNSVQQTEPSVMSSSPKATLPDTGDH) is disordered. The LPXTG sorting signal signature appears at 1388 to 1392 (LPDTG). Residue Thr1391 is modified to Pentaglycyl murein peptidoglycan amidated threonine. The propeptide at 1392–1423 (GDHKTDLSQLGVLAMIGSFLVEIAGYFKKRKD) is removed by sortase.

Belongs to the glycosyl hydrolase 32 family.

The protein resides in the secreted. It localises to the cell wall. It carries out the reaction Hydrolysis of terminal, non-reducing (2-&gt;1)- and (2-&gt;6)-linked beta-D-fructofuranose residues in fructans.. Functionally, this protein is a fructanase enzyme which degrades levans and inulins to fructose and also cleaves sucrose into glucose and fructose and can therefore function as an extracellular invertase. The sequence is that of Fructan beta-fructosidase (fruA) from Streptococcus mutans serotype c (strain ATCC 700610 / UA159).